The primary structure comprises 291 residues: MEAEKETEQEGNLTVMKLPVLPTKPNTHSHSMSSPIHSSISASVPFSWEEEPGKPKQHSTSSSSSSSSSPLTSYSSSPFETHKSLELPPRLHLLEKDGGSVTKLHSPITVFDGPYSMTTSKRMDSPSFRMMVKGSADCYGSFRSDIDGDLEDLEVGSKQQENLSSGSLAVVKKRGRLGFFGFRRRRALKGKTEFGRGSYVFPSSVDRESEYSRKEEEEEKEDKRFGYDDTDGISCSQSSRFCDVKISSISRTGSFSTLPAPPSSSSKSHFWTNVYAGLKQVVPWKSKKTTV.

The segment at 1 to 82 (MEAEKETEQE…SYSSSPFETH (82 aa)) is disordered. Composition is skewed to low complexity over residues 28–43 (HSHS…ISAS) and 59–78 (STSS…SSSP).

This is an uncharacterized protein from Arabidopsis thaliana (Mouse-ear cress).